We begin with the raw amino-acid sequence, 398 residues long: MNYNKKSIEDIDVKSKKVLVRCDFNVPLNEGKITDENRLVGALPTVKYLMEKGAKIILCSHMGKPKGEPKKELSLLPVAKRLSEMLNKEVVFADDDNVVGENAKKAVEDMKDGDIVLLQNTRYRKEETKNEEIFSKELASLADVFVNDAFGTAHRAHCSTVGVTHYLKEAACGYLIQKELKFLGNAVETPERPFVAILGGAKVSDKINVINNLLDKVDTLIIGGGMGYTFLKSLGYTVGDSLLEEDKVEYAKEMINKAKEKGVNFLLPVDITIADRFDKDAEPIVTEDQNVKEGYMGLDIGSKTAKIYADAIKSAKTVIWNGPMGVFEFKNFANGTIEVAKAMADSDAVTIIGGGDSAAAVNIFGFGDKMSHISTGGGASLEFLEGKELPGIAALNDK.

Substrate contacts are provided by residues 23–25 (DFN), arginine 38, 61–64 (HMGK), arginine 122, and arginine 155. Residues lysine 206, glycine 297, glutamate 328, and 354 to 357 (GGDS) contribute to the ATP site.

Belongs to the phosphoglycerate kinase family. In terms of assembly, monomer.

It localises to the cytoplasm. The enzyme catalyses (2R)-3-phosphoglycerate + ATP = (2R)-3-phospho-glyceroyl phosphate + ADP. It participates in carbohydrate degradation; glycolysis; pyruvate from D-glyceraldehyde 3-phosphate: step 2/5. The sequence is that of Phosphoglycerate kinase from Clostridium botulinum (strain Loch Maree / Type A3).